A 308-amino-acid chain; its full sequence is Olfactory receptor 4E2 (308 aa).

Over 1–24 (MGALNQTRVTEFIFLGLTDNWVLE) the chain is Extracellular. The N-linked (GlcNAc...) asparagine glycan is linked to asparagine 5. The chain crosses the membrane as a helical span at residues 25–45 (ILFFVPFTVTYMLTLLGNFLI). The Cytoplasmic portion of the chain corresponds to 46–57 (VVTIVFTPRLHN). Residues 58–78 (PMYFFLSNLSFIDICHSSVTV) traverse the membrane as a helical segment. The Extracellular portion of the chain corresponds to 79–97 (PKMLEGLLLERKTISFDNC). Cysteine 97 and cysteine 179 are joined by a disulfide. Residues 98-118 (IAQLFFLHLFACSEIFLLTIM) traverse the membrane as a helical segment. Histidine 105 and cysteine 109 together coordinate Cu cation. Over 119–143 (AYDRYVAICIPLHYSNVMNMKVCVQ) the chain is Cytoplasmic. The helical transmembrane segment at 144 to 164 (LVFALWLGGTIHSLVQTFLTI) threads the bilayer. The Extracellular portion of the chain corresponds to 165–204 (RLPYCGPNIIDSYFCDVPPVIKLACTDTYLTGILIVSNSG). A helical membrane pass occupies residues 205-225 (TISLVCFLALVTSYTVILFSL). Over 226 to 236 (RKQSAEGRRKA) the chain is Cytoplasmic. A helical transmembrane segment spans residues 237 to 257 (LSTCSAHFMVVALFFGPCIFL). The Extracellular portion of the chain corresponds to 258–268 (YTRPDSSFSID). Arginine 260 serves as a coordination point for Cu cation. The chain crosses the membrane as a helical span at residues 269 to 289 (KVVSVFYTVVTPLLNPLIYTL). The Cytoplasmic segment spans residues 290–308 (RNEEVKTAMKHLRQRRICS).

Belongs to the G-protein coupled receptor 1 family. In terms of tissue distribution, expressed in olfactory epithelium, specifically in the olfactory sensory neurons of the septal organ.

It localises to the cell membrane. Its activity is regulated as follows. Copper binding enhances receptor activity in response to odorant binding. Olfactory receptor that is activated by the binding of organosulfur odorants with thioether groups such as (methylthio)methanethiol (MTMT) and bis(methylthiomethyl) disulfide. Also binds odorants cis-cyclooctene and tert-butyl mercaptan. The activity of this receptor is mediated by G proteins which activate adenylyl cyclase (Potential). This chain is Olfactory receptor 4E2, found in Mus musculus (Mouse).